The sequence spans 293 residues: Methylsterol monooxygenase 1 (293 aa).

The next 2 helical transmembrane spans lie at 55-75 (LIVHEALYFSFCLPGFLFQFI) and 100-120 (VLLFNHFCIQLPLICGTYYFT). In terms of domain architecture, Fatty acid hydroxylase spans 145–274 (CAVIEDTWHY…FTWWDRIFGT (130 aa)). The short motif at 157 to 161 (HRLLH) is the Histidine box-1 element. The Histidine box-2 motif lies at 170-174 (HKVHH). A helical transmembrane segment spans residues 199–219 (FFIGIVLLCDHVILLWAWVTI). Positions 249-255 (HHDFHHM) match the Histidine box-3 motif.

Belongs to the sterol desaturase family. Fe cation serves as cofactor. In terms of processing, ubiquitinated by MARCHF6, leading to proteasomal degradation.

It localises to the endoplasmic reticulum membrane. The catalysed reaction is 4,4-dimethyl-5alpha-cholest-7-en-3beta-ol + 6 Fe(II)-[cytochrome b5] + 3 O2 + 5 H(+) = 4alpha-carboxy-4beta-methyl-5alpha-cholest-7-ene-3beta-ol + 6 Fe(III)-[cytochrome b5] + 4 H2O. It carries out the reaction 4,4-dimethyl-5alpha-cholesta-8,24-dien-3beta-ol + 6 Fe(II)-[cytochrome b5] + 3 O2 + 5 H(+) = 4beta-methylzymosterol-4alpha-carboxylate + 6 Fe(III)-[cytochrome b5] + 4 H2O. The enzyme catalyses 4alpha-methylzymosterol + 6 Fe(II)-[cytochrome b5] + 3 O2 + 5 H(+) = 4alpha-carboxyzymosterol + 6 Fe(III)-[cytochrome b5] + 4 H2O. It catalyses the reaction 4alpha-methyl-5alpha-cholest-7-en-3beta-ol + 6 Fe(II)-[cytochrome b5] + 3 O2 + 5 H(+) = 4alpha-carboxy-5alpha-cholest-7-en-3beta-ol + 6 Fe(III)-[cytochrome b5] + 4 H2O. The catalysed reaction is 4,4-dimethyl-5alpha-cholest-8-en-3beta-ol + 6 Fe(II)-[cytochrome b5] + 3 O2 + 5 H(+) = 4alpha-carboxy-4beta-methyl-5alpha-cholest-8-en-3beta-ol + 6 Fe(III)-[cytochrome b5] + 4 H2O. It carries out the reaction 4alpha-methyl-5alpha-cholest-8-en-3beta-ol + 6 Fe(II)-[cytochrome b5] + 3 O2 + 5 H(+) = 4alpha-carboxy-5alpha-cholest-8-ene-3beta-ol + 6 Fe(III)-[cytochrome b5] + 4 H2O. Its pathway is steroid biosynthesis; zymosterol biosynthesis; zymosterol from lanosterol: step 3/6. It participates in steroid biosynthesis; cholesterol biosynthesis. Catalyzes the three-step monooxygenation required for the demethylation of 4,4-dimethyl and 4alpha-methylsterols, which can be subsequently metabolized to cholesterol. This chain is Methylsterol monooxygenase 1 (MSMO1), found in Macaca fascicularis (Crab-eating macaque).